A 381-amino-acid polypeptide reads, in one-letter code: Na(+)/H(+) antiporter NhaA 1 (381 aa).

11 helical membrane-spanning segments follow: residues 18-38 (GLLLLFVTVISLWAANSSYSA), 53-73 (ITHWINDGLMTIFFLLIGLEL), 89-109 (SLPIMAAFGGMLIPAATFLAL), 118-138 (GAGIPMATDIAFAIGILSLLG), 147-167 (VFLTALAVIDDLGAIIVIAVF), 170-190 (TSIGFVNLAIALGIWVFLFVL), 210-230 (YFMLNSGIHATITGVILAFVI), 251-271 (PVAFFILPLFAIANTCIAIES), 283-303 (FGIILGLVIGKPLGILLFSSI), 321-341 (ILGAGMLGGIGFTMSIFITLL), and 348-368 (IIVFSKIAIIIASIISGITGF).

This sequence belongs to the NhaA Na(+)/H(+) (TC 2.A.33) antiporter family.

It is found in the cell inner membrane. It catalyses the reaction Na(+)(in) + 2 H(+)(out) = Na(+)(out) + 2 H(+)(in). Functionally, na(+)/H(+) antiporter that extrudes sodium in exchange for external protons. This Flavobacterium johnsoniae (strain ATCC 17061 / DSM 2064 / JCM 8514 / BCRC 14874 / CCUG 350202 / NBRC 14942 / NCIMB 11054 / UW101) (Cytophaga johnsonae) protein is Na(+)/H(+) antiporter NhaA 1.